Here is a 696-residue protein sequence, read N- to C-terminus: Rho-related BTB domain-containing protein 1 (696 aa).

Positions 1–210 are rho-like; it reads MDADMDYERP…DNAIRAALIS (210 aa). Residues 21–28, 84–88, and 140–143 contribute to the GTP site; these read GDNAVGKT, DTFGD, and CQLD. 2 consecutive BTB domains span residues 266–427 and 485–552; these read ADVL…DEKE and SDVT…SPNL. The interval 327 to 348 is disordered; sequence VDPEEEREEGPPRIPQADQWKS.

This sequence belongs to the small GTPase superfamily. Rho family. As to expression, ubiquitous, with highest levels in skeletal muscle, placenta, testis, stomach, and kidney, followed by uterus and adrenal gland. Expressed in a variety of fetal tissues.

The polypeptide is Rho-related BTB domain-containing protein 1 (RHOBTB1) (Homo sapiens (Human)).